A 464-amino-acid chain; its full sequence is tRNA-2-methylthio-N(6)-dimethylallyladenosine synthase (464 aa).

The region spanning 4-119 (RTFHIMTFGC…APQAIERLVQ (116 aa)) is the MTTase N-terminal domain. Residues C13, C48, C82, C158, C162, and C165 each coordinate [4Fe-4S] cluster. The Radical SAM core domain occupies 144–375 (GEVPVSAYVN…QEVQNEYSEA (232 aa)). The 84-residue stretch at 378 to 461 (QAMVGKTVMV…KHSLTGEPAG (84 aa)) folds into the TRAM domain. Residues 393–420 (SPKSAAGSGTDAQNAAEESGRTASSWQG) form a disordered region.

It belongs to the methylthiotransferase family. MiaB subfamily. Monomer. [4Fe-4S] cluster is required as a cofactor.

The protein localises to the cytoplasm. It catalyses the reaction N(6)-dimethylallyladenosine(37) in tRNA + (sulfur carrier)-SH + AH2 + 2 S-adenosyl-L-methionine = 2-methylsulfanyl-N(6)-dimethylallyladenosine(37) in tRNA + (sulfur carrier)-H + 5'-deoxyadenosine + L-methionine + A + S-adenosyl-L-homocysteine + 2 H(+). Its function is as follows. Catalyzes the methylthiolation of N6-(dimethylallyl)adenosine (i(6)A), leading to the formation of 2-methylthio-N6-(dimethylallyl)adenosine (ms(2)i(6)A) at position 37 in tRNAs that read codons beginning with uridine. The chain is tRNA-2-methylthio-N(6)-dimethylallyladenosine synthase from Oleidesulfovibrio alaskensis (strain ATCC BAA-1058 / DSM 17464 / G20) (Desulfovibrio alaskensis).